We begin with the raw amino-acid sequence, 597 residues long: Elongation factor 4 (597 aa).

The tr-type G domain occupies 2–184; that stretch reads DHIRNFSIIA…ALVAKVPPPK (183 aa). Residues 14-19 and 131-134 contribute to the GTP site; these read DHGKST and NKID.

It belongs to the TRAFAC class translation factor GTPase superfamily. Classic translation factor GTPase family. LepA subfamily.

Its subcellular location is the cell inner membrane. It carries out the reaction GTP + H2O = GDP + phosphate + H(+). In terms of biological role, required for accurate and efficient protein synthesis under certain stress conditions. May act as a fidelity factor of the translation reaction, by catalyzing a one-codon backward translocation of tRNAs on improperly translocated ribosomes. Back-translocation proceeds from a post-translocation (POST) complex to a pre-translocation (PRE) complex, thus giving elongation factor G a second chance to translocate the tRNAs correctly. Binds to ribosomes in a GTP-dependent manner. This Paraburkholderia phytofirmans (strain DSM 17436 / LMG 22146 / PsJN) (Burkholderia phytofirmans) protein is Elongation factor 4.